The chain runs to 295 residues: G1/S-specific cyclin-D1 (295 aa).

A Cyclin N-terminal domain is found at 28–152; that stretch reads LRAMLKAEET…VLVNKLKWNL (125 aa). Positions 264–295 are disordered; sequence QQNLDPKAAEEEEEEEEVDLACTPTDVRDVNI. Lys-270 participates in a covalent cross-link: Glycyl lysine isopeptide (Lys-Gly) (interchain with G-Cter in ubiquitin). Over residues 273–282 the composition is skewed to acidic residues; the sequence is EEEEEEEEVD. Thr-286 bears the Phosphothreonine mark.

It belongs to the cyclin family. Cyclin D subfamily. Interacts with either CDK4 or CDK6 protein kinase to form a serine/threonine kinase holoenzyme complex. The cyclin subunit imparts substrate specificity to the complex. Component of the ternary complex CCND1/CDK4/CDKN1B required for nuclear translocation and modulation of CDK4-mediated kinase activity. Interacts directly with CDKN1B. Can form similar complexes with either CDKN1A or CDKN2A. Interacts with UHRF2; the interaction ubiquitinates CCND1 and appears to occur independently of phosphorylation. Interacts with USP2. Interacts (via cyclin N-terminal domain) with INSM1 (via N-terminal region); the interaction competes with the binding of CCND1 to CDK4 during cell cycle progression and inhibits CDK4 activity. Interacts with CDK4; the interaction is prevented with the binding of CCND1 to INSM1 during cell cycle progression. Phosphorylation at Thr-286 by MAP kinases is required for ubiquitination and degradation by the DCX(AMBRA1) complex. It also plays an essential role for recognition by the FBXO31 component of SCF (SKP1-cullin-F-box) protein ligase complex following DNA damage. Post-translationally, ubiquitinated at Lys-270 by the DCX(AMBRA1) complex during the transition from G1 to S cell phase, leading to its degradation: ubiquitination is dependent on Thr-286 phosphorylation. The DCX(AMBRA1) complex represents the major regulator of CCND1 stability during the G1/S transition. Also ubiquitinated by the SCF(FBXO4) and Cul7-RING(FBXW8) ubiquitin-protein ligase complexes. Following DNA damage it is ubiquitinated by the SCF(FBXO31) protein ligase complex. SCF(FBXO31) ubiquitination is dependent on Thr-286 phosphorylation. Ubiquitinated also by UHRF2 apparently in a phosphorylation-independent manner. Ubiquitination leads to its degradation and G1 arrest. Deubiquitinated by USP2; leading to its stabilization.

The protein resides in the nucleus. It localises to the cytoplasm. The protein localises to the nucleus membrane. Functionally, regulatory component of the cyclin D1-CDK4 (DC) complex that phosphorylates and inhibits members of the retinoblastoma (RB) protein family including RB1 and regulates the cell-cycle during G(1)/S transition. Phosphorylation of RB1 allows dissociation of the transcription factor E2F from the RB/E2F complex and the subsequent transcription of E2F target genes which are responsible for the progression through the G(1) phase. Hypophosphorylates RB1 in early G(1) phase. Cyclin D-CDK4 complexes are major integrators of various mitogenenic and antimitogenic signals. Also a substrate for SMAD3, phosphorylating SMAD3 in a cell-cycle-dependent manner and repressing its transcriptional activity. Component of the ternary complex, cyclin D1/CDK4/CDKN1B, required for nuclear translocation and activity of the cyclin D-CDK4 complex. Exhibits transcriptional corepressor activity with INSM1 on the NEUROD1 and INS promoters in a cell cycle-independent manner. In Bos taurus (Bovine), this protein is G1/S-specific cyclin-D1 (CCND1).